A 296-amino-acid chain; its full sequence is Ribosomal RNA small subunit methyltransferase A (296 aa).

The S-adenosyl-L-methionine site is built by asparagine 40, valine 42, glycine 67, glutamate 88, aspartate 118, and asparagine 137.

The protein belongs to the class I-like SAM-binding methyltransferase superfamily. rRNA adenine N(6)-methyltransferase family. RsmA subfamily.

The protein resides in the cytoplasm. It carries out the reaction adenosine(1518)/adenosine(1519) in 16S rRNA + 4 S-adenosyl-L-methionine = N(6)-dimethyladenosine(1518)/N(6)-dimethyladenosine(1519) in 16S rRNA + 4 S-adenosyl-L-homocysteine + 4 H(+). Specifically dimethylates two adjacent adenosines (A1518 and A1519) in the loop of a conserved hairpin near the 3'-end of 16S rRNA in the 30S particle. May play a critical role in biogenesis of 30S subunits. This Rhodococcus opacus (strain B4) protein is Ribosomal RNA small subunit methyltransferase A.